The primary structure comprises 155 residues: Rusticyanin (155 aa).

A Plastocyanin-like domain is found at 53–155; that stretch reads SFEVHDKKNP…TGMFGKIIVK (103 aa). Cu cation-binding residues include His-85, Cys-138, His-143, and Met-148.

Monomer. Cu cation serves as cofactor.

Its subcellular location is the periplasm. Its function is as follows. Electron carrier from cytochrome c552 to the A-type oxidase. The protein is Rusticyanin (rus) of Acidithiobacillus ferrooxidans (Thiobacillus ferrooxidans).